Consider the following 88-residue polypeptide: Small ribosomal subunit protein bS18 (88 aa).

It belongs to the bacterial ribosomal protein bS18 family. Part of the 30S ribosomal subunit. Forms a tight heterodimer with protein bS6.

Functionally, binds as a heterodimer with protein bS6 to the central domain of the 16S rRNA, where it helps stabilize the platform of the 30S subunit. In Syntrophus aciditrophicus (strain SB), this protein is Small ribosomal subunit protein bS18.